The following is a 150-amino-acid chain: Large ribosomal subunit protein bL9 (150 aa).

It belongs to the bacterial ribosomal protein bL9 family.

In terms of biological role, binds to the 23S rRNA. This is Large ribosomal subunit protein bL9 from Albidiferax ferrireducens (strain ATCC BAA-621 / DSM 15236 / T118) (Rhodoferax ferrireducens).